The primary structure comprises 422 residues: Mitogen-activated protein kinase spm1 (422 aa).

A Protein kinase domain is found at 21-314 (FKVVKELGQG…VDDALEHPYL (294 aa)). Residues 27-35 (LGQGAYGIV) and K52 contribute to the ATP site. The active-site Proton acceptor is D149. A Phosphothreonine modification is found at T186. A TXY motif is present at residues 186–188 (TEY). Phosphotyrosine is present on Y188. Residues 359 to 422 (RRRSHPTNPT…DHKSDDNRHN (64 aa)) are disordered. Polar residues predominate over residues 364–379 (PTNPTVNIPQPAQTVP). Positions 380–397 (SNDNGSFNVSSSSSSQTS) are enriched in low complexity. Positions 411–422 (AIDHKSDDNRHN) are enriched in basic and acidic residues.

This sequence belongs to the protein kinase superfamily. CMGC Ser/Thr protein kinase family. MAP kinase subfamily. Requires Mg(2+) as cofactor. Post-translationally, dually phosphorylated on Thr-186 and Tyr-188, which activates the enzyme.

It carries out the reaction L-seryl-[protein] + ATP = O-phospho-L-seryl-[protein] + ADP + H(+). The catalysed reaction is L-threonyl-[protein] + ATP = O-phospho-L-threonyl-[protein] + ADP + H(+). Activated by tyrosine and threonine phosphorylation by skh1/pek1. In terms of biological role, regulates cell integrity and functions coordinately with the protein kinase C pathway (pck1 and pck2). Involved the regulation of wall architecture, cell shape, cytokinesis in exponential and stationary phase, and metabolism of ions. The polypeptide is Mitogen-activated protein kinase spm1 (spm1) (Schizosaccharomyces pombe (strain 972 / ATCC 24843) (Fission yeast)).